Consider the following 305-residue polypeptide: Heme A synthase (305 aa).

Residues 1–6 (MKKFLK) lie on the Cytoplasmic side of the membrane. The chain crosses the membrane as a helical span at residues 7–27 (VWSVLTIICMTVVVFGGALVT). Residues 28–63 (KTGSADGCGNSWPLCNGQLVRLTDVTPEKLIEFMHR) lie on the Extracellular side of the membrane. Residues Cys-35 and Cys-42 are joined by a disulfide bond. Glu-59 is an active-site residue. Residue His-62 coordinates heme o. The helical transmembrane segment at 64–84 (MTTGISSIFVIVLAICAWIYM) threads the bilayer. At 85 to 92 (KNRRETKP) the chain is on the cytoplasmic side. A helical membrane pass occupies residues 93–113 (LAIIAVLFLIIQALMGMAAVV). Topologically, residues 114–122 (WGQNPYIMA) are extracellular. A helical transmembrane segment spans residues 123–143 (LHFGISIICYASIVLLALMIF). His-124 contacts heme o. The Cytoplasmic segment spans residues 144–160 (EVDRKFDARNLVMGTKL). The chain crosses the membrane as a helical span at residues 161–181 (RINIYALTIYTYLAVYTGALV). The Extracellular portion of the chain corresponds to 182–212 (RHEKASMAVPVWPFENGKFIMPDSVQDYVQY). A helical transmembrane segment spans residues 213–233 (FHRVAAFILIVWLLYVTWLVF). A heme b-binding site is contributed by His-214. Residues 234–240 (RDYRRYR) lie on the Cytoplasmic side of the membrane. The helical transmembrane segment at 241-261 (VLTFSMVLSLLFIALQAVTGA) threads the bilayer. At 262–271 (LSVYTGVNLY) the chain is on the extracellular side. The chain crosses the membrane as a helical span at residues 272 to 292 (IALAHSLIITMLFALLCYLCL). His-276 is a binding site for heme b. Residues 293 to 305 (LASRSKSNRLRIK) are Cytoplasmic-facing.

It belongs to the COX15/CtaA family. Type 1 subfamily. As to quaternary structure, interacts with CtaB. The cofactor is heme b.

It localises to the cell membrane. It carries out the reaction Fe(II)-heme o + 2 A + H2O = Fe(II)-heme a + 2 AH2. It functions in the pathway porphyrin-containing compound metabolism; heme A biosynthesis; heme A from heme O: step 1/1. Its function is as follows. Catalyzes the conversion of heme O to heme A by two successive hydroxylations of the methyl group at C8. The first hydroxylation forms heme I, the second hydroxylation results in an unstable dihydroxymethyl group, which spontaneously dehydrates, resulting in the formyl group of heme A. The protein is Heme A synthase of Listeria welshimeri serovar 6b (strain ATCC 35897 / DSM 20650 / CCUG 15529 / CIP 8149 / NCTC 11857 / SLCC 5334 / V8).